A 262-amino-acid chain; its full sequence is MLIIPAIDIKGGKCVRLTRGDFEQEKIYLDEPSDMAIIWRKQNAKLIHVVDLDAALTGKPENFDKIKQIVDTLDIPIEIGGGIRTAEDAARYLDIGVYRVVIGSAAVKNPSLVSQLIEKYGPRKIVVGIDAEDGIAKISGWTESSQKKDYELALEMKDRGVERIIYTDITRDGTLEGVGYETTKAFAEKAQMRITASGGVFGKQDLSKLCKLEHLGVDSVIIGKALYEERFPCQKLWHLFEESISLDTNFSTAEQKQNSVAG.

Aspartate 8 acts as the Proton acceptor in catalysis. Residue aspartate 130 is the Proton donor of the active site.

It belongs to the HisA/HisF family.

It is found in the cytoplasm. It catalyses the reaction 1-(5-phospho-beta-D-ribosyl)-5-[(5-phospho-beta-D-ribosylamino)methylideneamino]imidazole-4-carboxamide = 5-[(5-phospho-1-deoxy-D-ribulos-1-ylimino)methylamino]-1-(5-phospho-beta-D-ribosyl)imidazole-4-carboxamide. It participates in amino-acid biosynthesis; L-histidine biosynthesis; L-histidine from 5-phospho-alpha-D-ribose 1-diphosphate: step 4/9. The polypeptide is 1-(5-phosphoribosyl)-5-[(5-phosphoribosylamino)methylideneamino] imidazole-4-carboxamide isomerase (Chloroherpeton thalassium (strain ATCC 35110 / GB-78)).